We begin with the raw amino-acid sequence, 633 residues long: Mini-chromosome maintenance complex-binding protein (633 aa).

Positions 154 to 198 are disordered; it reads PSTSYTPSRHKRSYEEDEDMEQHPSKQKEQHMGSGGDSHGCGEPK. Over residues 174–184 the composition is skewed to basic and acidic residues; the sequence is EQHPSKQKEQH.

Belongs to the MCMBP family. Interacts with the MCM complex: associates with the MCM3-7 complex which lacks MCM2, while it does not interact with the MCM complex when MCM2 is present (MCM2-7 complex).

It is found in the nucleus. In terms of biological role, associated component of the MCM complex that acts as a regulator of DNA replication. Binds to the MCM complex during late S phase and promotes the disassembly of the MCM complex from chromatin, thereby acting as a key regulator of pre-replication complex (pre-RC) unloading from replicated DNA. Can dissociate the MCM complex without addition of ATP; probably acts by destabilizing interactions of each individual subunits of the MCM complex. Required for sister chromatid cohesion. The chain is Mini-chromosome maintenance complex-binding protein (MCMBP) from Gallus gallus (Chicken).